Reading from the N-terminus, the 152-residue chain is UPF0178 protein SAR0734 (152 aa).

This sequence belongs to the UPF0178 family.

This chain is UPF0178 protein SAR0734, found in Staphylococcus aureus (strain MRSA252).